The primary structure comprises 370 residues: uncharacterized protein (370 aa).

Residues Asp152, His154, Asp184, Asn215, His306, and His308 each coordinate a divalent metal cation.

This sequence belongs to the metallophosphoesterase superfamily. A divalent metal cation is required as a cofactor.

This is an uncharacterized protein from Helicobacter pylori (strain ATCC 700392 / 26695) (Campylobacter pylori).